The primary structure comprises 126 residues: Protein ApaG (126 aa).

The region spanning 2–126 (SDPRYQVDVS…FRLAVPGALH (125 aa)) is the ApaG domain.

In Pseudomonas fluorescens (strain Pf0-1), this protein is Protein ApaG.